A 725-amino-acid chain; its full sequence is MGALRWLSIAATASTALALNPEGLISAPRRSEAIPNPSGDVAVFSQSQYSFKTHKTTSQWNVLDLKSGDIKLLTNDSDVSEIVWLGSDDSTVLYVNGTNADIPGGVELWVSDISDFANGYKAASLPASFSGFKVVTTDSGDVRYVAYAESWANGTAYNEELVAKPLSSARIYDSIYVRHWDYYLTTRFNAVFSGTLKKSEGKGKATYKADGDLKNLVSPVKNAESPYPPFGGASDYDLSPDGKWVAFKSKAHDIPRANYTTAYIFLVPHDGSKTAVPINGPDSPGTPEGVKGDAGSPVFSPDSKKIAYWQMADESYEADHRTLYVYTVGSEETIPSLAADWDRSLDSVKWADDDNLIIGVEDAGRSRLFSIPADAGDDYKPKNFTDGGVVSAYYQLPDSTYLVTSTAIWTSWNVYIASPEKGVIKTLATANKIDPELKGLGPEIVDEFYYEGNWTKIQAFVIYPENFDKSKSYPLLYYIHGGPQSSWLDSWSTRWNPKVFADQGYVVVAPNPTGSSGFGDALQDAIQNQWGGYPYEDLVKGWEYVNENFDFIDTDNGVAAGASYGGFMINWIQGSDLGRKFKALVSHDGTFVADAKVSTEELWFMQHEFNGTFWDNRENYRRWDPSAPERILKFSTPMLIIHSDLDYRLPVSEGLSLFNILQERGVPSRFLNFPDENHWVQNKENSLVWHQQVLGWLNKYSGVEESNEDAVSLDDTVIPVVDYNP.

Positions methionine 1–alanine 18 are cleaved as a signal peptide. Asparagine 75, asparagine 96, asparagine 153, asparagine 258, asparagine 383, and asparagine 453 each carry an N-linked (GlcNAc...) asparagine glycan. Serine 563 (charge relay system) is an active-site residue. The N-linked (GlcNAc...) asparagine glycan is linked to asparagine 610. Active-site charge relay system residues include aspartate 646 and histidine 678.

This sequence belongs to the peptidase S9C family.

Its subcellular location is the secreted. In terms of biological role, extracellular dipeptidyl-peptidase which removes N-terminal dipeptides sequentially from polypeptides having unsubstituted N-termini. The sequence is that of Probable dipeptidyl-peptidase 5 (dpp5) from Aspergillus flavus (strain ATCC 200026 / FGSC A1120 / IAM 13836 / NRRL 3357 / JCM 12722 / SRRC 167).